A 162-amino-acid polypeptide reads, in one-letter code: MTLRIGHGFDVHRFGDGDHLMIGGVRIPYVQGFVAHSDGDVLLHAICDALLGACALGDIGRHFPDTDAAWAGADSRDLLRHVHTLVMAAGYAVANLDATVIAQAPRMAEHIPAMRACIAEDLDLDTTAVNVKATTSERLGFTGRKEGIAAEAVVLLMPTGTT.

Positions 10 and 12 each coordinate a divalent metal cation. 4-CDP-2-C-methyl-D-erythritol 2-phosphate-binding positions include 10–12 (DVH) and 36–37 (HS). His-44 serves as a coordination point for a divalent metal cation. Residues 58 to 60 (DIG), 63 to 67 (FPDTD), 102 to 108 (AQAPRMA), 134 to 137 (TTSE), Phe-141, and Arg-144 contribute to the 4-CDP-2-C-methyl-D-erythritol 2-phosphate site.

Belongs to the IspF family. In terms of assembly, homotrimer. Requires a divalent metal cation as cofactor.

The catalysed reaction is 4-CDP-2-C-methyl-D-erythritol 2-phosphate = 2-C-methyl-D-erythritol 2,4-cyclic diphosphate + CMP. Its pathway is isoprenoid biosynthesis; isopentenyl diphosphate biosynthesis via DXP pathway; isopentenyl diphosphate from 1-deoxy-D-xylulose 5-phosphate: step 4/6. Involved in the biosynthesis of isopentenyl diphosphate (IPP) and dimethylallyl diphosphate (DMAPP), two major building blocks of isoprenoid compounds. Catalyzes the conversion of 4-diphosphocytidyl-2-C-methyl-D-erythritol 2-phosphate (CDP-ME2P) to 2-C-methyl-D-erythritol 2,4-cyclodiphosphate (ME-CPP) with a corresponding release of cytidine 5-monophosphate (CMP). In Chromohalobacter salexigens (strain ATCC BAA-138 / DSM 3043 / CIP 106854 / NCIMB 13768 / 1H11), this protein is 2-C-methyl-D-erythritol 2,4-cyclodiphosphate synthase.